A 232-amino-acid chain; its full sequence is DNA repair protein RecO (232 aa).

The protein belongs to the RecO family.

Its function is as follows. Involved in DNA repair and RecF pathway recombination. This Francisella tularensis subsp. novicida (strain U112) protein is DNA repair protein RecO.